The primary structure comprises 307 residues: UDP-N-acetylenolpyruvoylglucosamine reductase (307 aa).

Residues 33-197 form the FAD-binding PCMH-type domain; it reads TGGNADFYIT…LEAAFTLAPG (165 aa). Arg176 is an active-site residue. Residue Ser226 is the Proton donor of the active site. Glu296 is a catalytic residue.

Belongs to the MurB family. It depends on FAD as a cofactor.

The protein resides in the cytoplasm. The enzyme catalyses UDP-N-acetyl-alpha-D-muramate + NADP(+) = UDP-N-acetyl-3-O-(1-carboxyvinyl)-alpha-D-glucosamine + NADPH + H(+). Its pathway is cell wall biogenesis; peptidoglycan biosynthesis. Functionally, cell wall formation. This is UDP-N-acetylenolpyruvoylglucosamine reductase from Staphylococcus aureus (strain Mu3 / ATCC 700698).